The sequence spans 1216 residues: ATP-dependent helicase/nuclease subunit A (1216 aa).

Residues 26–488 (QKKTAEQIEA…IILKENFRSS (463 aa)) form the UvrD-like helicase ATP-binding domain. 47-54 (ASAGSGKT) is an ATP binding site. Residues 515–802 (KHQLVFANTK…ELMTIHKSKG (288 aa)) enclose the UvrD-like helicase C-terminal domain.

Belongs to the helicase family. AddA subfamily. In terms of assembly, heterodimer of AddA and AddB/RexB. Requires Mg(2+) as cofactor.

The enzyme catalyses Couples ATP hydrolysis with the unwinding of duplex DNA by translocating in the 3'-5' direction.. The catalysed reaction is ATP + H2O = ADP + phosphate + H(+). Functionally, the heterodimer acts as both an ATP-dependent DNA helicase and an ATP-dependent, dual-direction single-stranded exonuclease. Recognizes the chi site generating a DNA molecule suitable for the initiation of homologous recombination. The AddA nuclease domain is required for chi fragment generation; this subunit has the helicase and 3' -&gt; 5' nuclease activities. The sequence is that of ATP-dependent helicase/nuclease subunit A from Streptococcus pneumoniae serotype 2 (strain D39 / NCTC 7466).